Consider the following 166-residue polypeptide: RNA pyrophosphohydrolase (166 aa).

The Nudix hydrolase domain maps to 8 to 158 (PYRSCVGMML…KRPVYERVVK (151 aa)). Positions 47–68 (GGIDPGEDYWEAAQRELLEETN) match the Nudix box motif.

This sequence belongs to the Nudix hydrolase family. RppH subfamily. The cofactor is a divalent metal cation.

Functionally, accelerates the degradation of transcripts by removing pyrophosphate from the 5'-end of triphosphorylated RNA, leading to a more labile monophosphorylated state that can stimulate subsequent ribonuclease cleavage. This is RNA pyrophosphohydrolase from Afipia carboxidovorans (strain ATCC 49405 / DSM 1227 / KCTC 32145 / OM5) (Oligotropha carboxidovorans).